A 344-amino-acid chain; its full sequence is GLIPR1-like protein 2 (344 aa).

The region spanning 58-192 (VNLHNELRGD…IHAAIFICNY (135 aa)) is the SCP domain. The helical transmembrane segment at 254-274 (TFILLLRILCFILCVITVLIV) threads the bilayer. Composition is skewed to acidic residues over residues 292-304 (EESE…EEKE) and 312-334 (EMEM…EEET). The segment at 292-344 (EESEAGNEEEEKEEEKKEKEEMEMEIMEMEEEKEEREEEEEETQKEKMEEEEK) is disordered. Basic and acidic residues predominate over residues 335–344 (QKEKMEEEEK).

It belongs to the CRISP family. In terms of tissue distribution, highly expressed in testis. Detected in prostate, kidney, bladder, lung and bone marrow.

The protein localises to the membrane. The protein is GLIPR1-like protein 2 (GLIPR1L2) of Homo sapiens (Human).